A 393-amino-acid chain; its full sequence is S-adenosylmethionine synthase 2 (393 aa).

Glutamate 9 is a Mg(2+) binding site. Histidine 15 contributes to the ATP binding site. Glutamate 43 contributes to the K(+) binding site. L-methionine contacts are provided by glutamate 56 and glutamine 99. Residues 167-169 (DGK), 235-238 (SGRF), aspartate 246, 252-253 (RK), alanine 269, lysine 273, and lysine 277 each bind ATP. Aspartate 246 contacts L-methionine. Residue lysine 277 coordinates L-methionine.

This sequence belongs to the AdoMet synthase family. In terms of assembly, homotetramer. Requires Mn(2+) as cofactor. The cofactor is Mg(2+). Co(2+) is required as a cofactor. It depends on K(+) as a cofactor. In terms of tissue distribution, roots and shoots.

Its subcellular location is the cytoplasm. The enzyme catalyses L-methionine + ATP + H2O = S-adenosyl-L-methionine + phosphate + diphosphate. Its pathway is amino-acid biosynthesis; S-adenosyl-L-methionine biosynthesis; S-adenosyl-L-methionine from L-methionine: step 1/1. Catalyzes the formation of S-adenosylmethionine from methionine and ATP. The reaction comprises two steps that are both catalyzed by the same enzyme: formation of S-adenosylmethionine (AdoMet) and triphosphate, and subsequent hydrolysis of the triphosphate. This chain is S-adenosylmethionine synthase 2 (SAMS2), found in Pinus contorta (Shore pine).